The primary structure comprises 1342 residues: DNA-directed RNA polymerase subunit beta (1342 aa).

Belongs to the RNA polymerase beta chain family. The RNAP catalytic core consists of 2 alpha, 1 beta, 1 beta' and 1 omega subunit. When a sigma factor is associated with the core the holoenzyme is formed, which can initiate transcription.

It carries out the reaction RNA(n) + a ribonucleoside 5'-triphosphate = RNA(n+1) + diphosphate. Functionally, DNA-dependent RNA polymerase catalyzes the transcription of DNA into RNA using the four ribonucleoside triphosphates as substrates. The sequence is that of DNA-directed RNA polymerase subunit beta from Aliivibrio fischeri (strain ATCC 700601 / ES114) (Vibrio fischeri).